A 161-amino-acid polypeptide reads, in one-letter code: Nucleotide-binding protein Rpic_2826 (161 aa).

Belongs to the YajQ family.

Its function is as follows. Nucleotide-binding protein. This chain is Nucleotide-binding protein Rpic_2826, found in Ralstonia pickettii (strain 12J).